The following is a 258-amino-acid chain: UPF0246 protein YaaA (258 aa).

The protein belongs to the UPF0246 family.

The protein is UPF0246 protein YaaA of Shigella flexneri serotype 5b (strain 8401).